Consider the following 228-residue polypeptide: MSYSEKPEDITKEEWMDKLNNVHIQRADMNRLIMNYLVTEGFKEAAEKFRMESGIEPNVDLDSLDERIKIREMVLKGQIQEAIALINSLHPELLDTNRYLYFHLQQQHLIELIRLRETEAALEFAQSQLAEQGEESRECLTEMERTLALLAFDNPEESPFGDLLNMMQRQKVWSEVNQAVLDYENRESTPKLAKLLKLLLWAQNELDQKKVKYSRMTDLSKGTIEDPK.

The LisH domain maps to 25-57 (QRADMNRLIMNYLVTEGFKEAAEKFRMESGIEP). The region spanning 63-120 (SLDERIKIREMVLKGQIQEAIALINSLHPELLDTNRYLYFHLQQQHLIELIRLRETEA) is the CTLH domain.

Belongs to the GID8 family. As to quaternary structure, identified in the CTLH complex that contains at least MAEA, RMND5A (or alternatively its paralog RMND5B), GID8, WDR26, and RANBP9 and/or RANBP10. Interacts with CTNNB1.

Functionally, core component of the CTLH E3 ubiquitin-protein ligase complex that selectively accepts ubiquitin from UBE2H and mediates ubiquitination and subsequent proteasomal degradation of target proteins. Acts as a positive regulator of Wnt signaling pathway by promoting beta-catenin (CTNNB1) nuclear accumulation. Required for normal Wnt signaling and normal dorsoventral patterning during embryogenesis. This chain is Glucose-induced degradation protein 8-A homolog (gid8a), found in Danio rerio (Zebrafish).